The following is a 78-amino-acid chain: MGGISIWQLLIIAVIVVLLFGTKKLRGIGSDLGGAIKGFKKAMNEEESEKKDADFEPKSLEQQSKQAATESKKDKEQA.

Residues 1–21 form a helical membrane-spanning segment; sequence MGGISIWQLLIIAVIVVLLFG. Residues 47–59 show a composition bias toward basic and acidic residues; the sequence is ESEKKDADFEPKS. Positions 47–78 are disordered; sequence ESEKKDADFEPKSLEQQSKQAATESKKDKEQA. The span at 60–69 shows a compositional bias: polar residues; it reads LEQQSKQAAT.

It belongs to the TatA/E family. The Tat system comprises two distinct complexes: a TatABC complex, containing multiple copies of TatA, TatB and TatC subunits, and a separate TatA complex, containing only TatA subunits. Substrates initially bind to the TatABC complex, which probably triggers association of the separate TatA complex to form the active translocon.

Its subcellular location is the cell inner membrane. In terms of biological role, part of the twin-arginine translocation (Tat) system that transports large folded proteins containing a characteristic twin-arginine motif in their signal peptide across membranes. TatA could form the protein-conducting channel of the Tat system. The sequence is that of Sec-independent protein translocase protein TatA from Vibrio vulnificus (strain CMCP6).